A 96-amino-acid polypeptide reads, in one-letter code: Co-chaperonin GroES (96 aa).

It belongs to the GroES chaperonin family. As to quaternary structure, heptamer of 7 subunits arranged in a ring. Interacts with the chaperonin GroEL.

Its subcellular location is the cytoplasm. Functionally, together with the chaperonin GroEL, plays an essential role in assisting protein folding. The GroEL-GroES system forms a nano-cage that allows encapsulation of the non-native substrate proteins and provides a physical environment optimized to promote and accelerate protein folding. GroES binds to the apical surface of the GroEL ring, thereby capping the opening of the GroEL channel. The chain is Co-chaperonin GroES from Hydrogenovibrio crunogenus (strain DSM 25203 / XCL-2) (Thiomicrospira crunogena).